Consider the following 180-residue polypeptide: Major urinary protein 17 (180 aa).

Residues 1–18 (MKMLLLLCLGLTLVCVHA) form the signal peptide. The cysteines at positions 82 and 175 are disulfide-linked.

This sequence belongs to the calycin superfamily. Lipocalin family. Because of their involvement in the coordination of social behavior, Mup proteins are thought to exhibit variable expression depending upon gender, age and status of the studied individuals. Expression may also be strain-specific: in strains C57BL/6J and 129S7, transcriptional support is lacking for Mup17.

It is found in the secreted. Major urinary proteins (Mups) bind pheromones, thus stabilize them and allow slow release into the air from urine marks. May protect pheromones from oxidation. May also act as pheromones themselves. In this context, they play a role in the regulation of social behaviors, such as aggression, mating, pup-suckling, territory establishment and dominance. The chain is Major urinary protein 17 (Mup17) from Mus musculus (Mouse).